A 139-amino-acid polypeptide reads, in one-letter code: D-ribose pyranase (139 aa).

H20 functions as the Proton donor in the catalytic mechanism. Substrate is bound by residues D28, H106, and 128–130; that span reads YAN.

It belongs to the RbsD / FucU family. RbsD subfamily. In terms of assembly, homodecamer.

The protein localises to the cytoplasm. It catalyses the reaction beta-D-ribopyranose = beta-D-ribofuranose. Its pathway is carbohydrate metabolism; D-ribose degradation; D-ribose 5-phosphate from beta-D-ribopyranose: step 1/2. Catalyzes the interconversion of beta-pyran and beta-furan forms of D-ribose. The polypeptide is D-ribose pyranase (Vibrio campbellii (strain ATCC BAA-1116)).